The primary structure comprises 362 residues: Phosphoglycolate phosphatase 1B, chloroplastic (362 aa).

The transit peptide at 1 to 54 (MLSRSVASAVTPVSSSSLLPNSKPIFCLKTLSGYRSSSFCGGCIRKINHKPLRM) directs the protein to the chloroplast. Threonine 55 bears the N-acetylthreonine mark. Residue glutamate 80 is the Nucleophile of the active site. Phosphoserine is present on serine 356.

It belongs to the HAD-like hydrolase superfamily. CbbY/CbbZ/Gph/YieH family.

It is found in the plastid. The protein resides in the chloroplast. It catalyses the reaction 2-phosphoglycolate + H2O = glycolate + phosphate. In terms of biological role, photorespiratory enzyme that dephosphorylates the 2-phosphoglycolate produced by the RuBisCO oxygenation reaction. The protein is Phosphoglycolate phosphatase 1B, chloroplastic (PGLP1B) of Arabidopsis thaliana (Mouse-ear cress).